Here is a 440-residue protein sequence, read N- to C-terminus: Cobyrinate a,c-diamide synthase (440 aa).

In terms of domain architecture, GATase cobBQ-type spans 247–428 (RIAIAYDAAF…MHLYFPSNPR (182 aa)). C329 (nucleophile) is an active-site residue.

The protein belongs to the CobB/CbiA family. The cofactor is Mg(2+).

The enzyme catalyses cob(II)yrinate + 2 L-glutamine + 2 ATP + 2 H2O = cob(II)yrinate a,c diamide + 2 L-glutamate + 2 ADP + 2 phosphate + 2 H(+). It functions in the pathway cofactor biosynthesis; adenosylcobalamin biosynthesis; cob(II)yrinate a,c-diamide from sirohydrochlorin (anaerobic route): step 10/10. Catalyzes the ATP-dependent amidation of the two carboxylate groups at positions a and c of cobyrinate, using either L-glutamine or ammonia as the nitrogen source. The chain is Cobyrinate a,c-diamide synthase from Picrophilus torridus (strain ATCC 700027 / DSM 9790 / JCM 10055 / NBRC 100828 / KAW 2/3).